Here is a 129-residue protein sequence, read N- to C-terminus: MSTIPTDLKFASSHEWVRKEDDGSYTVGITEHAQELLGDMVFVELPEVGDSVSAGAECAVAESVKAASDIYAPISGEVVAVNSSLEDSPELVNSDAYGDGWFFRIMPSDESEVDALLDAEGYQDVIDEA.

In terms of domain architecture, Lipoyl-binding spans 24–106 (SYTVGITEHA…YGDGWFFRIM (83 aa)). Lys65 carries the post-translational modification N6-lipoyllysine.

This sequence belongs to the GcvH family. In terms of assembly, the glycine cleavage system is composed of four proteins: P, T, L and H. The cofactor is (R)-lipoate.

Functionally, the glycine cleavage system catalyzes the degradation of glycine. The H protein shuttles the methylamine group of glycine from the P protein to the T protein. This Shewanella denitrificans (strain OS217 / ATCC BAA-1090 / DSM 15013) protein is Glycine cleavage system H protein.